The chain runs to 163 residues: Transcription antitermination protein NusB (163 aa).

This sequence belongs to the NusB family.

In terms of biological role, involved in transcription antitermination. Required for transcription of ribosomal RNA (rRNA) genes. Binds specifically to the boxA antiterminator sequence of the ribosomal RNA (rrn) operons. The protein is Transcription antitermination protein NusB of Chlorobium luteolum (strain DSM 273 / BCRC 81028 / 2530) (Pelodictyon luteolum).